Reading from the N-terminus, the 465-residue chain is UDP-N-acetylmuramoylalanine--D-glutamate ligase (465 aa).

Position 127 to 133 (127 to 133) interacts with ATP; it reads GSNGKST.

This sequence belongs to the MurCDEF family.

The protein resides in the cytoplasm. The catalysed reaction is UDP-N-acetyl-alpha-D-muramoyl-L-alanine + D-glutamate + ATP = UDP-N-acetyl-alpha-D-muramoyl-L-alanyl-D-glutamate + ADP + phosphate + H(+). It functions in the pathway cell wall biogenesis; peptidoglycan biosynthesis. In terms of biological role, cell wall formation. Catalyzes the addition of glutamate to the nucleotide precursor UDP-N-acetylmuramoyl-L-alanine (UMA). The sequence is that of UDP-N-acetylmuramoylalanine--D-glutamate ligase from Cereibacter sphaeroides (strain ATCC 17025 / ATH 2.4.3) (Rhodobacter sphaeroides).